We begin with the raw amino-acid sequence, 434 residues long: Probable G-protein coupled receptor 150 (434 aa).

The Extracellular portion of the chain corresponds to 1-3 (MED). Residues 4 to 24 (LFSPSILPPAPNISVPILLGW) traverse the membrane as a helical segment. The Cytoplasmic segment spans residues 25–43 (GLNLTLGQGAPASGPPSRR). A helical membrane pass occupies residues 44-64 (VRLVFLGVILVVAVAGNTTVL). Residues 65-81 (CRLCGGGGPWAGPKRRK) are Extracellular-facing. A helical transmembrane segment spans residues 82-102 (MDFLLVQLALADLYACGGTAL). The Cytoplasmic portion of the chain corresponds to 103 to 162 (SQLAWELLGEPRAATGDLACRFLQLLQASGRGASAHLVVLIALERRRAVRLPHGRPLPAR). Residues 163–183 (ALAALGWLLALLLALPPAFVV) form a helical membrane-spanning segment. Topologically, residues 184-237 (RGDSPSPLPPPPPPTSLQPGAPPAARAWPGERRCHGIFAPLPRWHLQVYAFYEA) are extracellular. The interval 188-210 (PSPLPPPPPPTSLQPGAPPAARA) is disordered. Over residues 189 to 205 (SPLPPPPPPTSLQPGAP) the composition is skewed to pro residues. The chain crosses the membrane as a helical span at residues 238-258 (VAGFVAPVTVLGVACGHLLSV). The Cytoplasmic segment spans residues 259-293 (WWRHRPQAPAAAAPWSASPGRAPAPSALPRAKVQS). Residues 294-314 (LKMSLLLALLFVGCELPYFAA) form a helical membrane-spanning segment. The Extracellular segment spans residues 315–334 (RLAAAWSSGPAGDWEGEGLS). Residues 335 to 355 (AALRVVAMANSALNPFVYLFF) traverse the membrane as a helical segment. Topologically, residues 356–434 (QAGDCRLRRQ…PLPCSCESAF (79 aa)) are cytoplasmic. Basic residues predominate over residues 398-407 (WPHPHYHHAR). The interval 398–434 (WPHPHYHHARREPLDEGGLRPPPPRPRPLPCSCESAF) is disordered. A compositionally biased stretch (pro residues) spans 417 to 426 (RPPPPRPRPL).

The protein belongs to the G-protein coupled receptor 1 family.

It is found in the cell membrane. Functionally, orphan receptor. The polypeptide is Probable G-protein coupled receptor 150 (GPR150) (Homo sapiens (Human)).